The sequence spans 429 residues: Carboxypeptidase B (429 aa).

Positions 1–15 (MKFLLVLALCAVVYA) are cleaved as a signal peptide. A Peptidase M14 domain is found at 121 to 423 (NYQELEVIDE…EGIVVGARRA (303 aa)). Residues His182 and Glu185 each contribute to the Zn(2+) site. Residues 182 to 185 (HARE), Arg236, and 256 to 257 (NR) each bind substrate. Cys250 and Cys273 are joined by a disulfide. His309 is a binding site for Zn(2+). Residues 310 to 311 (SF) and Tyr365 contribute to the substrate site. Glu387 (proton donor/acceptor) is an active-site residue.

Belongs to the peptidase M14 family. Requires Zn(2+) as cofactor.

The protein localises to the secreted. The catalysed reaction is Preferential release of a C-terminal lysine or arginine amino acid.. With respect to regulation, highly resistant to inhibition by potato carboxypeptidase inhibitor (PCI). Moderately inhibited by leech carboxypeptidase inhibitor (LCI) and tick carboxypeptidase inhibitor (TCI). Functionally, metalloprotease which cleaves a single amino acid from the C-terminal end of polypeptide chains. Shows a strong preference for peptides with a terminal lysine residue. The chain is Carboxypeptidase B from Helicoverpa zea (Corn earworm moth).